We begin with the raw amino-acid sequence, 449 residues long: Protein tweety homolog 1-A (449 aa).

Residues 1–43 (MSTSHGYRASWWTNILHQVPHTNFQFEVVDNQFAPQEWPYQQA) lie on the Extracellular side of the membrane. Residues 44–64 (LLFLASIAGLCLAISLILICV) form a helical membrane-spanning segment. At 65 to 86 (YLIRFCCCASQEDDDSKNHRVC) the chain is on the cytoplasmic side. A helical membrane pass occupies residues 87 to 107 (CVTWSCVAAVIICCAGIGIGF). The Extracellular segment spans residues 108-212 (YGNSETNDGV…QVNFIEDYRW (105 aa)). Asparagine 128 is a glycosylation site (N-linked (GlcNAc...) asparagine). Residues 213-233 (LAYILLLLLDLIICLFTLLGL) traverse the membrane as a helical segment. Over 234–238 (AKRIK) the chain is Cytoplasmic. Residues 239-259 (WLVIVMTVVSFFVLLLSWGSM) form a helical membrane-spanning segment. Over 260–388 (GLEMATAVGL…LKGLCYDGME (129 aa)) the chain is Extracellular. Intrachain disulfides connect cysteine 273/cysteine 383 and cysteine 301/cysteine 368. N-linked (GlcNAc...) asparagine glycosylation is found at asparagine 282 and asparagine 353. Residues 389-409 (GILFLLLFSFLSALSFTAAVC) form a helical membrane-spanning segment. Residues 410 to 449 (SLPRAWKRFQNRDLDYDDMDEDDPFNPQESKRFVQWQSSI) lie on the Cytoplasmic side of the membrane.

Belongs to the tweety family. In terms of assembly, homotetramer; disulfide-linked. Homodimer.

The protein localises to the cell membrane. It carries out the reaction chloride(in) = chloride(out). The catalysed reaction is L-glutamate(out) = L-glutamate(in). May act as a calcium-independent, swelling-dependent volume-regulated anion channel (VRAC-swell) which plays a pivotal role in the process of regulatory volume decrease (RVD) in the brain through the efflux of anions like chloride and organic osmolytes like glutamate. This chain is Protein tweety homolog 1-A (ttyh1-a), found in Xenopus laevis (African clawed frog).